A 320-amino-acid chain; its full sequence is Probable 5-dehydro-4-deoxyglucarate dehydratase (320 aa).

The protein belongs to the DapA family.

The catalysed reaction is 5-dehydro-4-deoxy-D-glucarate + H(+) = 2,5-dioxopentanoate + CO2 + H2O. It functions in the pathway carbohydrate acid metabolism; D-glucarate degradation; 2,5-dioxopentanoate from D-glucarate: step 2/2. This is Probable 5-dehydro-4-deoxyglucarate dehydratase from Streptomyces griseus subsp. griseus (strain JCM 4626 / CBS 651.72 / NBRC 13350 / KCC S-0626 / ISP 5235).